Consider the following 411-residue polypeptide: Multifunctional CCA protein (411 aa).

Residues glycine 8 and arginine 11 each contribute to the ATP site. CTP contacts are provided by glycine 8 and arginine 11. The Mg(2+) site is built by aspartate 21 and aspartate 23. 3 residues coordinate ATP: arginine 91, arginine 143, and arginine 146. CTP-binding residues include arginine 91, arginine 143, and arginine 146. An HD domain is found at 232 to 333 (TGVHVMMVID…MRLLERCDAL (102 aa)).

It belongs to the tRNA nucleotidyltransferase/poly(A) polymerase family. Bacterial CCA-adding enzyme type 1 subfamily. As to quaternary structure, monomer. Can also form homodimers and oligomers. Mg(2+) serves as cofactor. Requires Ni(2+) as cofactor.

The catalysed reaction is a tRNA precursor + 2 CTP + ATP = a tRNA with a 3' CCA end + 3 diphosphate. The enzyme catalyses a tRNA with a 3' CCA end + 2 CTP + ATP = a tRNA with a 3' CCACCA end + 3 diphosphate. Functionally, catalyzes the addition and repair of the essential 3'-terminal CCA sequence in tRNAs without using a nucleic acid template. Adds these three nucleotides in the order of C, C, and A to the tRNA nucleotide-73, using CTP and ATP as substrates and producing inorganic pyrophosphate. tRNA 3'-terminal CCA addition is required both for tRNA processing and repair. Also involved in tRNA surveillance by mediating tandem CCA addition to generate a CCACCA at the 3' terminus of unstable tRNAs. While stable tRNAs receive only 3'-terminal CCA, unstable tRNAs are marked with CCACCA and rapidly degraded. This is Multifunctional CCA protein from Cupriavidus necator (strain ATCC 17699 / DSM 428 / KCTC 22496 / NCIMB 10442 / H16 / Stanier 337) (Ralstonia eutropha).